Consider the following 216-residue polypeptide: MDWMWLLSGACIVFTLGMFSSGLSDLRVMVAQRSVENIQYLPFLTTDLNNLGWFYYGYLKGDGTLMIVNVIGASLQSLYMGAYLLYSPERRYVGSQVLVSLGVLLLGYCYFTLWILDLNSRLNQLGLFCSVFTISMYLSPLADLAQIIRSKSTKCLSFPLTVATFLTSSSWVLYGLVQSDLYITVPNFPGIVTSLVRFWLFSQFPPDPPTYRLLQA.

7 consecutive transmembrane segments (helical) span residues 3–23 (WMWL…SSGL), 36–56 (ENIQ…WFYY), 65–85 (LMIV…AYLL), 96–116 (QVLV…LWIL), 125–145 (LGLF…ADLA), 157–177 (SFPL…YGLV), and 181–201 (LYIT…FWLF). In terms of domain architecture, MtN3/slv 1 spans 6 to 90 (LLSGACIVFT…GAYLLYSPER (85 aa)). The MtN3/slv 2 domain occupies 124-206 (QLGLFCSVFT…RFWLFSQFPP (83 aa)).

It belongs to the SWEET sugar transporter family.

Its subcellular location is the golgi apparatus membrane. The protein localises to the cell membrane. Mediates sugar transport across membranes. In Xenopus laevis (African clawed frog), this protein is Sugar transporter SWEET1 (slc50a1).